The chain runs to 440 residues: GTPase Obg (440 aa).

The Obg domain occupies 5 to 163 (STFVDQTKIE…RTLRLELKVL (159 aa)). Residues 164–338 (ADVGLVGFPS…LMSRAADLVS (175 aa)) form the OBG-type G domain. GTP contacts are provided by residues 170-177 (GFPSVGKS), 195-199 (FTTLK), 217-220 (DLPG), 288-291 (SQMD), and 319-321 (SSV). Residues serine 177 and threonine 197 each coordinate Mg(2+). Positions 362 to 440 (YHRPEKMEFT…IGDFSFEFVQ (79 aa)) constitute an OCT domain.

Belongs to the TRAFAC class OBG-HflX-like GTPase superfamily. OBG GTPase family. Monomer. Requires Mg(2+) as cofactor.

Its subcellular location is the cytoplasm. Its function is as follows. An essential GTPase which binds GTP, GDP and possibly (p)ppGpp with moderate affinity, with high nucleotide exchange rates and a fairly low GTP hydrolysis rate. Plays a role in control of the cell cycle, stress response, ribosome biogenesis and in those bacteria that undergo differentiation, in morphogenesis control. The protein is GTPase Obg of Lactobacillus delbrueckii subsp. bulgaricus (strain ATCC 11842 / DSM 20081 / BCRC 10696 / JCM 1002 / NBRC 13953 / NCIMB 11778 / NCTC 12712 / WDCM 00102 / Lb 14).